Here is a 219-residue protein sequence, read N- to C-terminus: Uracil-DNA glycosylase (219 aa).

Asp-61 (proton acceptor) is an active-site residue.

This sequence belongs to the uracil-DNA glycosylase (UDG) superfamily. UNG family.

The protein resides in the cytoplasm. The enzyme catalyses Hydrolyzes single-stranded DNA or mismatched double-stranded DNA and polynucleotides, releasing free uracil.. Excises uracil residues from the DNA which can arise as a result of misincorporation of dUMP residues by DNA polymerase or due to deamination of cytosine. This Neisseria meningitidis serogroup B (strain ATCC BAA-335 / MC58) protein is Uracil-DNA glycosylase.